The following is a 199-amino-acid chain: Inner membrane-spanning protein YciB (199 aa).

A run of 5 helical transmembrane segments spans residues 3-23 (LLID…WGIY), 47-67 (VEPM…ATLL), 76-96 (WKPS…QLVF), 119-139 (LNWS…VIAY), and 149-169 (FKLF…AIYM). Positions 180–199 (AAAATPDALPPPGVQQDKQP) are disordered.

Belongs to the YciB family.

The protein localises to the cell inner membrane. Plays a role in cell envelope biogenesis, maintenance of cell envelope integrity and membrane homeostasis. In Delftia acidovorans (strain DSM 14801 / SPH-1), this protein is Inner membrane-spanning protein YciB.